Here is a 303-residue protein sequence, read N- to C-terminus: L(+)-tartrate dehydratase subunit alpha (303 aa).

Positions 71, 190, and 277 each coordinate iron-sulfur cluster.

The protein belongs to the class-I fumarase family. As to quaternary structure, tetramer of two alpha and two beta subunits. The cofactor is iron-sulfur cluster.

It carries out the reaction (2R,3R)-tartrate = oxaloacetate + H2O. The chain is L(+)-tartrate dehydratase subunit alpha (ttdA) from Escherichia coli O157:H7.